A 122-amino-acid chain; its full sequence is Large ribosomal subunit protein uL14 (122 aa).

It belongs to the universal ribosomal protein uL14 family. Part of the 50S ribosomal subunit. Forms a cluster with proteins L3 and L19. In the 70S ribosome, L14 and L19 interact and together make contacts with the 16S rRNA in bridges B5 and B8.

Its function is as follows. Binds to 23S rRNA. Forms part of two intersubunit bridges in the 70S ribosome. In Bacillus licheniformis (strain ATCC 14580 / DSM 13 / JCM 2505 / CCUG 7422 / NBRC 12200 / NCIMB 9375 / NCTC 10341 / NRRL NRS-1264 / Gibson 46), this protein is Large ribosomal subunit protein uL14.